A 215-amino-acid polypeptide reads, in one-letter code: Pyrophosphate-energized proton pump 2 (215 aa).

5 helical membrane passes run 16–36, 51–71, 86–106, 136–156, and 164–184; these read VYPL…TFFV, GLIA…YATV, GTNL…IVVI, GLAV…GGII, and LFGT…IVAL.

Belongs to the H(+)-translocating pyrophosphatase (TC 3.A.10) family. Homodimer. Requires Mg(2+) as cofactor.

It localises to the cell inner membrane. The enzyme catalyses diphosphate + H2O + H(+)(in) = 2 phosphate + 2 H(+)(out). Proton pump that utilizes the energy of pyrophosphate hydrolysis as the driving force for proton movement across the membrane. Generates a proton motive force. This chain is Pyrophosphate-energized proton pump 2 (hppA2), found in Rhizobium leguminosarum bv. trifolii.